A 533-amino-acid polypeptide reads, in one-letter code: MNSPVDRILIFDTTLRDGEQSPGATLTVEEKLSIARALARLGVDIIEAGFPFASPGDFEAVQKIAQTVGTENGPVICGLARATQKDIKAAAEALKPAAKHRIHTFLATSDIHLEHKLKKTRAEVLAIVPEMVAYAKSLVNDIEFSPEDAGRSDPEFLYQVLEAAISAGATTINIPDTVGYTTPAEYGALIKGIADNVPNIDQAIISVHGHNDLGLAVANFLEAVKNGARQLECTINGIGERAGNAALEELVMALHVRRSYFNPFLGRPADSTAPLTNIDTKHIYATSRLVSELTGMMVQPNKAIVGANAFAHESGIHQDGVLKNKLTYEIMDAESIGLTNNQIVLGKLSGRNAFGTRLKELGFDLSDTELNNAFIRFKEVADKRKEITDWDLEAIVNDEIRQPPELFRLERVQVSCGEPSVPTATLTIRTPAGPEETAVAIGTGPVDAVYKAINQIVQLPNELLEYSVTSVTEGIDALGKVSVRLRHNGVIYTGYAANTDIIVASARAYLGALNRLYAALEKSREHPPVVASL.

The Pyruvate carboxyltransferase domain occupies 8-269 (ILIFDTTLRD…YFNPFLGRPA (262 aa)). Residues aspartate 17, histidine 208, histidine 210, and asparagine 244 each coordinate Mn(2+). The segment at 408–533 (RLERVQVSCG…REHPPVVASL (126 aa)) is regulatory domain.

Belongs to the alpha-IPM synthase/homocitrate synthase family. LeuA type 1 subfamily. Homodimer. Mn(2+) is required as a cofactor.

Its subcellular location is the cytoplasm. The enzyme catalyses 3-methyl-2-oxobutanoate + acetyl-CoA + H2O = (2S)-2-isopropylmalate + CoA + H(+). It functions in the pathway amino-acid biosynthesis; L-leucine biosynthesis; L-leucine from 3-methyl-2-oxobutanoate: step 1/4. Functionally, catalyzes the condensation of the acetyl group of acetyl-CoA with 3-methyl-2-oxobutanoate (2-ketoisovalerate) to form 3-carboxy-3-hydroxy-4-methylpentanoate (2-isopropylmalate). This Synechocystis sp. (strain ATCC 27184 / PCC 6803 / Kazusa) protein is 2-isopropylmalate synthase.